A 185-amino-acid polypeptide reads, in one-letter code: Ribosome-recycling factor (185 aa).

It belongs to the RRF family.

It localises to the cytoplasm. Responsible for the release of ribosomes from messenger RNA at the termination of protein biosynthesis. May increase the efficiency of translation by recycling ribosomes from one round of translation to another. In Tolumonas auensis (strain DSM 9187 / NBRC 110442 / TA 4), this protein is Ribosome-recycling factor.